Reading from the N-terminus, the 426-residue chain is Glutamate-1-semialdehyde 2,1-aminomutase (426 aa).

N6-(pyridoxal phosphate)lysine is present on lysine 265.

This sequence belongs to the class-III pyridoxal-phosphate-dependent aminotransferase family. HemL subfamily. Homodimer. Requires pyridoxal 5'-phosphate as cofactor.

Its subcellular location is the cytoplasm. The enzyme catalyses (S)-4-amino-5-oxopentanoate = 5-aminolevulinate. It participates in porphyrin-containing compound metabolism; protoporphyrin-IX biosynthesis; 5-aminolevulinate from L-glutamyl-tRNA(Glu): step 2/2. The polypeptide is Glutamate-1-semialdehyde 2,1-aminomutase (Aliarcobacter butzleri (strain RM4018) (Arcobacter butzleri)).